Consider the following 242-residue polypeptide: Probable transcriptional regulatory protein BamMC406_2210 (242 aa).

The protein belongs to the TACO1 family.

The protein localises to the cytoplasm. This chain is Probable transcriptional regulatory protein BamMC406_2210, found in Burkholderia ambifaria (strain MC40-6).